Consider the following 180-residue polypeptide: Adenine phosphoribosyltransferase (180 aa).

The protein belongs to the purine/pyrimidine phosphoribosyltransferase family. In terms of assembly, homodimer.

It is found in the cytoplasm. It carries out the reaction AMP + diphosphate = 5-phospho-alpha-D-ribose 1-diphosphate + adenine. The protein operates within purine metabolism; AMP biosynthesis via salvage pathway; AMP from adenine: step 1/1. Catalyzes a salvage reaction resulting in the formation of AMP, that is energically less costly than de novo synthesis. In Agrobacterium fabrum (strain C58 / ATCC 33970) (Agrobacterium tumefaciens (strain C58)), this protein is Adenine phosphoribosyltransferase.